The primary structure comprises 64 residues: Large ribosomal subunit protein eL37 (64 aa).

Residues C20, C23, C35, and C38 each contribute to the Zn(2+) site. A C4-type zinc finger spans residues 20–38; sequence CRRCGRRAFHVRKKVCAAC.

It belongs to the eukaryotic ribosomal protein eL37 family. The cofactor is Zn(2+).

Binds to the 23S rRNA. This is Large ribosomal subunit protein eL37 from Methanococcus maripaludis (strain DSM 14266 / JCM 13030 / NBRC 101832 / S2 / LL).